The chain runs to 120 residues: Anti-adapter protein IraM (120 aa).

The protein belongs to the IraM/RssC family.

Its subcellular location is the cytoplasm. Functionally, involved in the stabilization of the sigma stress factor RpoS. The protein is Anti-adapter protein IraM of Salmonella choleraesuis (strain SC-B67).